Reading from the N-terminus, the 51-residue chain is Large ribosomal subunit protein eL39 (51 aa).

It belongs to the eukaryotic ribosomal protein eL39 family.

This Methanococcoides burtonii (strain DSM 6242 / NBRC 107633 / OCM 468 / ACE-M) protein is Large ribosomal subunit protein eL39.